A 130-amino-acid polypeptide reads, in one-letter code: Large ribosomal subunit protein bL20 (130 aa).

Belongs to the bacterial ribosomal protein bL20 family.

Binds directly to 23S ribosomal RNA and is necessary for the in vitro assembly process of the 50S ribosomal subunit. It is not involved in the protein synthesizing functions of that subunit. This is Large ribosomal subunit protein bL20 from Nocardioides sp. (strain ATCC BAA-499 / JS614).